Consider the following 82-residue polypeptide: RNA-binding protein Hfq (82 aa).

One can recognise a Sm domain in the interval 11 to 71 (DTFLNHVRKT…ISTIMPGAPI (61 aa)).

The protein belongs to the Hfq family. As to quaternary structure, homohexamer.

Its function is as follows. RNA chaperone that binds small regulatory RNA (sRNAs) and mRNAs to facilitate mRNA translational regulation in response to envelope stress, environmental stress and changes in metabolite concentrations. Also binds with high specificity to tRNAs. In Rhodopseudomonas palustris (strain HaA2), this protein is RNA-binding protein Hfq.